We begin with the raw amino-acid sequence, 314 residues long: Ribosomal protein L11 methyltransferase (314 aa).

T163, G184, D206, and N248 together coordinate S-adenosyl-L-methionine.

The protein belongs to the methyltransferase superfamily. PrmA family.

The protein resides in the cytoplasm. It carries out the reaction L-lysyl-[protein] + 3 S-adenosyl-L-methionine = N(6),N(6),N(6)-trimethyl-L-lysyl-[protein] + 3 S-adenosyl-L-homocysteine + 3 H(+). Its function is as follows. Methylates ribosomal protein L11. The polypeptide is Ribosomal protein L11 methyltransferase (Lactobacillus acidophilus (strain ATCC 700396 / NCK56 / N2 / NCFM)).